The primary structure comprises 397 residues: Nuclear pore complex-interacting protein family member B2 (397 aa).

The disordered stretch occupies residues 256–397; it reads NRMGHQPPPP…KLRTGHCTQA (142 aa). A compositionally biased stretch (polar residues) spans 267–277; sequence QQHSITDNSLS. Low complexity predominate over residues 278 to 287; that stretch reads LKTPPECLLT. Residues 382 to 391 show a composition bias toward basic residues; that stretch reads KRRRLSKLRT.

It belongs to the NPIP family.

The protein localises to the nucleus. The chain is Nuclear pore complex-interacting protein family member B2 from Homo sapiens (Human).